Consider the following 489-residue polypeptide: UDP-N-acetylmuramoyl-L-alanyl-D-glutamate--2,6-diaminopimelate ligase (489 aa).

Serine 32 is a UDP-N-acetyl-alpha-D-muramoyl-L-alanyl-D-glutamate binding site. 113–119 (GTNGKTT) contributes to the ATP binding site. Residues 154-155 (TT), serine 181, glutamine 187, and arginine 189 contribute to the UDP-N-acetyl-alpha-D-muramoyl-L-alanyl-D-glutamate site. Lysine 221 bears the N6-carboxylysine mark. Meso-2,6-diaminopimelate-binding positions include arginine 381, 405–408 (DNPR), glycine 456, and glutamate 460. The short motif at 405-408 (DNPR) is the Meso-diaminopimelate recognition motif element.

The protein belongs to the MurCDEF family. MurE subfamily. Mg(2+) serves as cofactor. Post-translationally, carboxylation is probably crucial for Mg(2+) binding and, consequently, for the gamma-phosphate positioning of ATP.

Its subcellular location is the cytoplasm. It catalyses the reaction UDP-N-acetyl-alpha-D-muramoyl-L-alanyl-D-glutamate + meso-2,6-diaminopimelate + ATP = UDP-N-acetyl-alpha-D-muramoyl-L-alanyl-gamma-D-glutamyl-meso-2,6-diaminopimelate + ADP + phosphate + H(+). Its pathway is cell wall biogenesis; peptidoglycan biosynthesis. Functionally, catalyzes the addition of meso-diaminopimelic acid to the nucleotide precursor UDP-N-acetylmuramoyl-L-alanyl-D-glutamate (UMAG) in the biosynthesis of bacterial cell-wall peptidoglycan. The protein is UDP-N-acetylmuramoyl-L-alanyl-D-glutamate--2,6-diaminopimelate ligase of Gloeobacter violaceus (strain ATCC 29082 / PCC 7421).